Here is a 54-residue protein sequence, read N- to C-terminus: Large ribosomal subunit protein bL32 (54 aa).

Positions 1-24 (MAVQKSKPTRSKRGMRRSHDSLKE) are disordered. A compositionally biased stretch (basic residues) spans 7–16 (KPTRSKRGMR).

Belongs to the bacterial ribosomal protein bL32 family.

This is Large ribosomal subunit protein bL32 from Buchnera aphidicola subsp. Schizaphis graminum (strain Sg).